A 287-amino-acid polypeptide reads, in one-letter code: MKSFVKPERDSLLRTVRIVFTDPDATDDSSSSSDEWLPKPRKVKRFVHEITFLPQVSESSQDRSNAVKTPRRKSTRQFKYPVGVRPRPSGKFAAEILNPFTKTKKWLGTYETPAEAEKAYVDKKVEYDALASSGSAVSSSVVTVTSQCLRSPTSASVSCVSADDLSKEKTSLNKDVAASGDSTTKEVFTTFDFSDVKIPDLRFLAAEEDSMVSNANGAELDFDCFLTDSNILLDDYSLLENDINFSRFENSLPSELPDCDFTEMEFQLDDFKFAYTDHLTTPPLGLV.

The AP2/ERF DNA-binding region spans 80 to 140; sequence YPVGVRPRPS…ASSGSAVSSS (61 aa).

This sequence belongs to the AP2/ERF transcription factor family. ERF subfamily.

It is found in the nucleus. Functionally, probably acts as a transcriptional activator. Binds to the GCC-box pathogenesis-related promoter element. May be involved in the regulation of gene expression by stress factors and by components of stress signal transduction pathways. In Arabidopsis thaliana (Mouse-ear cress), this protein is Ethylene-responsive transcription factor ERF116 (ERF116).